We begin with the raw amino-acid sequence, 467 residues long: ATP synthase subunit beta (467 aa).

G150 to T157 lines the ATP pocket.

The protein belongs to the ATPase alpha/beta chains family. As to quaternary structure, F-type ATPases have 2 components, CF(1) - the catalytic core - and CF(0) - the membrane proton channel. CF(1) has five subunits: alpha(3), beta(3), gamma(1), delta(1), epsilon(1). CF(0) has three main subunits: a(1), b(2) and c(9-12). The alpha and beta chains form an alternating ring which encloses part of the gamma chain. CF(1) is attached to CF(0) by a central stalk formed by the gamma and epsilon chains, while a peripheral stalk is formed by the delta and b chains.

It is found in the cell inner membrane. It catalyses the reaction ATP + H2O + 4 H(+)(in) = ADP + phosphate + 5 H(+)(out). Functionally, produces ATP from ADP in the presence of a proton gradient across the membrane. The catalytic sites are hosted primarily by the beta subunits. In Vibrio alginolyticus, this protein is ATP synthase subunit beta.